A 470-amino-acid chain; its full sequence is tRNA-2-methylthio-N(6)-dimethylallyladenosine synthase (470 aa).

The MTTase N-terminal domain maps to 20–138; sequence PRVHIETFGC…LPELVERARS (119 aa). [4Fe-4S] cluster-binding residues include Cys-29, Cys-65, Cys-99, Cys-176, Cys-180, and Cys-183. The region spanning 162 to 398 is the Radical SAM core domain; it reads REGDLKAWVT…MEVQNRIARA (237 aa). Residues 401 to 464 form the TRAM domain; the sequence is EARVGKVYDI…TWTLEGELVE (64 aa).

Belongs to the methylthiotransferase family. MiaB subfamily. As to quaternary structure, monomer. [4Fe-4S] cluster serves as cofactor.

The protein resides in the cytoplasm. It carries out the reaction N(6)-dimethylallyladenosine(37) in tRNA + (sulfur carrier)-SH + AH2 + 2 S-adenosyl-L-methionine = 2-methylsulfanyl-N(6)-dimethylallyladenosine(37) in tRNA + (sulfur carrier)-H + 5'-deoxyadenosine + L-methionine + A + S-adenosyl-L-homocysteine + 2 H(+). Catalyzes the methylthiolation of N6-(dimethylallyl)adenosine (i(6)A), leading to the formation of 2-methylthio-N6-(dimethylallyl)adenosine (ms(2)i(6)A) at position 37 in tRNAs that read codons beginning with uridine. In Symbiobacterium thermophilum (strain DSM 24528 / JCM 14929 / IAM 14863 / T), this protein is tRNA-2-methylthio-N(6)-dimethylallyladenosine synthase.